A 129-amino-acid chain; its full sequence is Histone H2A.J (129 aa).

Residues 1–22 (MSGRGKQGGKVRAKAKSRSSRA) are disordered. 2 positions are modified to N6-acetyllysine: Lys-6 and Lys-10. Positions 7-19 (QGGKVRAKAKSRS) are enriched in basic residues. At Lys-10 the chain carries N6-lactoyllysine; alternate. An N5-methylglutamine modification is found at Gln-105. Thr-121 carries the post-translational modification Phosphothreonine; by DCAF1.

Belongs to the histone H2A family. In terms of assembly, the nucleosome is a histone octamer containing two molecules each of H2A, H2B, H3 and H4 assembled in one H3-H4 heterotetramer and two H2A-H2B heterodimers. The octamer wraps approximately 147 bp of DNA. In terms of processing, glutamine methylation at Gln-105 (H2AQ104me) by FBL is specifically dedicated to polymerase I. It is present at 35S ribosomal DNA locus and impairs binding of the FACT complex. Monoubiquitination of Lys-120 (H2AXK119ub) gives a specific tag for epigenetic transcriptional repression. Following DNA double-strand breaks (DSBs), it is ubiquitinated through 'Lys-63' linkage of ubiquitin moieties. Post-translationally, phosphorylation on Ser-2 (H2AS1ph) is enhanced during mitosis. Phosphorylation on Ser-2 by RPS6KA5/MSK1 directly represses transcription. Acetylation of H3 inhibits Ser-2 phosphorylation by RPS6KA5/MSK1. Phosphorylation at Thr-121 (H2AT120ph) by DCAF1 is present in the regulatory region of many tumor suppresor genes and down-regulates their transcription.

It localises to the nucleus. Its subcellular location is the chromosome. In terms of biological role, core component of nucleosome. Nucleosomes wrap and compact DNA into chromatin, limiting DNA accessibility to the cellular machineries which require DNA as a template. Histones thereby play a central role in transcription regulation, DNA repair, DNA replication and chromosomal stability. DNA accessibility is regulated via a complex set of post-translational modifications of histones, also called histone code, and nucleosome remodeling. This Bos taurus (Bovine) protein is Histone H2A.J.